The chain runs to 1049 residues: Tegument protein pp150 (1049 aa).

Disordered regions lie at residues 397-549 and 659-945; these read EERQ…DPRF and PFRM…YPAV. Positions 428-439 are enriched in acidic residues; it reads ADEDDDDDDDDE. Over residues 452-462 the composition is skewed to gly residues; sequence SGKGAASGGGV. Residues 463-474 are compositionally biased toward low complexity; sequence SSIFSGLLSSGS. The span at 475-490 shows a compositional bias: polar residues; it reads QKPTSGPLNIPQQQQR. The span at 509–525 shows a compositional bias: basic and acidic residues; sequence VRRDSAWDVRPLTETRG. Residues 672 to 688 are compositionally biased toward low complexity; that stretch reads TVSTTPRRPSTPRAAVT. Acidic residues predominate over residues 710 to 722; that stretch reads PVEDSEEEDDDSS. The span at 731–743 shows a compositional bias: polar residues; sequence GHTTPSSDYNNDV. Positions 745–757 are enriched in low complexity; sequence SPPSQTPEQSTPS. 3 stretches are compositionally biased toward polar residues: residues 766–776, 791–800, and 808–835; these read SPMTTTSTSQK, RAQTVTSTPV, and VSGTPSTVPATLLQPQPASSKTTSSRNV. Composition is skewed to low complexity over residues 836–855, 866–884, 912–928, and 936–945; these read TSGAGTSSASSARQPSASAS, SPATSPLSMLSSASPSPAK, VVGRPPSVPVSGSAPGR, and ASTTPTYPAV. S922 carries an O-linked (GlcNAc) serine; by host glycan. O-linked (GlcNAc) serine; by host glycosylation is present at S953. The segment at 1006–1032 is disordered; it reads DLSSPQKSGTGPQPGSAGMGGAKTPSD. Residues 1008 to 1018 show a composition bias toward polar residues; the sequence is SSPQKSGTGPQ.

Belongs to the herpesviridae large structural phosphoprotein family. Interacts with host BICD1 and RAB6A. Interacts with small capsid protein UL48A; this interaction links together the capsid and pp150. Interacts with host CCNA2. In terms of processing, phosphorylated by host CCNA2.

The protein resides in the virion tegument. The protein localises to the host cytoplasm. Its subcellular location is the host nucleus. Participates in the last steps of viral maturation and release. Associates with nuclear capsids prior to DNA encapsidation and later preserves the integrity of nucleocapsids through secondary envelopment at the assembly compartment. Interacts with host CCNA2 and thereby blocks the onset of lytic gene expression to promote establishment of a quiescent state of infection in undifferentiated cells. This is Tegument protein pp150 (UL32) from Homo sapiens (Human).